The sequence spans 506 residues: UDP-N-acetylmuramoyl-L-alanyl-D-glutamate--2,6-diaminopimelate ligase (506 aa).

Ser-42 contributes to the UDP-N-acetyl-alpha-D-muramoyl-L-alanyl-D-glutamate binding site. 125 to 131 (GTSGKTT) is a binding site for ATP. UDP-N-acetyl-alpha-D-muramoyl-L-alanyl-D-glutamate contacts are provided by residues 166 to 167 (TT), Ser-193, and Arg-201. The residue at position 233 (Lys-233) is an N6-carboxylysine. Residues Arg-395, 419–422 (DNPR), Gly-475, and Glu-479 each bind meso-2,6-diaminopimelate. The Meso-diaminopimelate recognition motif signature appears at 419 to 422 (DNPR).

This sequence belongs to the MurCDEF family. MurE subfamily. The cofactor is Mg(2+). Carboxylation is probably crucial for Mg(2+) binding and, consequently, for the gamma-phosphate positioning of ATP.

Its subcellular location is the cytoplasm. It carries out the reaction UDP-N-acetyl-alpha-D-muramoyl-L-alanyl-D-glutamate + meso-2,6-diaminopimelate + ATP = UDP-N-acetyl-alpha-D-muramoyl-L-alanyl-gamma-D-glutamyl-meso-2,6-diaminopimelate + ADP + phosphate + H(+). The protein operates within cell wall biogenesis; peptidoglycan biosynthesis. Functionally, catalyzes the addition of meso-diaminopimelic acid to the nucleotide precursor UDP-N-acetylmuramoyl-L-alanyl-D-glutamate (UMAG) in the biosynthesis of bacterial cell-wall peptidoglycan. The protein is UDP-N-acetylmuramoyl-L-alanyl-D-glutamate--2,6-diaminopimelate ligase of Streptomyces coelicolor (strain ATCC BAA-471 / A3(2) / M145).